The following is a 235-amino-acid chain: Lipoprotein-releasing system ATP-binding protein LolD (235 aa).

The region spanning 5-235 (LECRDIRKVY…LMTESASVEG (231 aa)) is the ABC transporter domain. 41 to 48 (GSSGSGKS) is a binding site for ATP.

Belongs to the ABC transporter superfamily. Lipoprotein translocase (TC 3.A.1.125) family. In terms of assembly, the complex is composed of two ATP-binding proteins (LolD) and two transmembrane proteins (LolC and LolE).

The protein resides in the cell inner membrane. Its function is as follows. Part of the ABC transporter complex LolCDE involved in the translocation of mature outer membrane-directed lipoproteins, from the inner membrane to the periplasmic chaperone, LolA. Responsible for the formation of the LolA-lipoprotein complex in an ATP-dependent manner. The sequence is that of Lipoprotein-releasing system ATP-binding protein LolD from Vibrio parahaemolyticus serotype O3:K6 (strain RIMD 2210633).